The sequence spans 442 residues: D(2) dopamine receptor A (442 aa).

The Extracellular portion of the chain corresponds to 1–31 (MDPQNLSMYNDDINNGTNGTAVDQKPHYNYY). N-linked (GlcNAc...) asparagine glycans are attached at residues asparagine 5, asparagine 15, and asparagine 18. The helical transmembrane segment at 32–54 (AMLLTLLVFVIVFGNVLVCIAVS) threads the bilayer. The Cytoplasmic segment spans residues 55-64 (REKALQTTTN). A helical transmembrane segment spans residues 65–87 (YLIVSLAVADLLVATLVMPWAVY). Topologically, residues 88–102 (MEVVGEWRFSRIHCD) are extracellular. A disulfide bridge connects residues cysteine 101 and cysteine 176. The chain crosses the membrane as a helical span at residues 103–124 (IFVTLDVMMCTASILNLCAISI). Topologically, residues 125–145 (DRYTAVAMPMLYNTRYSSKRR) are cytoplasmic. A helical transmembrane segment spans residues 146–166 (VTVMISVVWVLSFAISCPLLF). Topologically, residues 167 to 182 (GLNNTGSKVCIIDNPA) are extracellular. Residues 183–207 (FVIYSSIVSFYVPFIVTLLVYVQIY) traverse the membrane as a helical segment. The Cytoplasmic segment spans residues 208–372 (IVLRKRRKRV…SQHKEKKATQ (165 aa)). Residues 273–335 (DMEMEMMSST…KNGHPKDSTK (63 aa)) are disordered. Polar residues predominate over residues 304-318 (ATSNQCKNASLTSPV). The span at 322–335 (YKAEKNGHPKDSTK) shows a compositional bias: basic and acidic residues. Residues 373–394 (MLAIVLGVFIICWLPFFIIHIL) traverse the membrane as a helical segment. Residues 395 to 408 (NMHCNCNIPQALYS) lie on the Extracellular side of the membrane. An intrachain disulfide couples cysteine 398 to cysteine 400. A helical membrane pass occupies residues 409 to 430 (AFTWLGYVNSAVNPIIYTTFNV). Residues 431–442 (EFRKAFIKILHC) lie on the Cytoplasmic side of the membrane. The S-palmitoyl cysteine moiety is linked to residue cysteine 442.

It belongs to the G-protein coupled receptor 1 family. In terms of processing, palmitoylated. Palmitoylation is probably required for proper localization to the plasma membrane and stability of the receptor. Brain; pituitary.

It is found in the cell membrane. It localises to the golgi apparatus membrane. Its function is as follows. This is one of the five types (D1 to D5) of receptors for dopamine. The activity of this receptor is mediated by G proteins which inhibits adenylyl cyclase. In Xenopus D2R is involved in the regulation of the melanotrope cells of the intermediate pituitary during background adaptation of the animal. This chain is D(2) dopamine receptor A (drd2-a), found in Xenopus laevis (African clawed frog).